The sequence spans 260 residues: uncharacterized protein (260 aa).

The first 22 residues, 1–22, serve as a signal peptide directing secretion; the sequence is MKHSKKLLLCISFLLITIFISG. Residue Cys-23 is the site of N-palmitoyl cysteine attachment. Residue Cys-23 is the site of S-diacylglycerol cysteine attachment.

It belongs to the staphylococcal tandem lipoprotein family.

It is found in the cell membrane. This is an uncharacterized protein from Staphylococcus epidermidis (strain ATCC 35984 / DSM 28319 / BCRC 17069 / CCUG 31568 / BM 3577 / RP62A).